Reading from the N-terminus, the 450-residue chain is tRNA modification GTPase MnmE (450 aa).

Positions 26, 84, and 123 each coordinate (6S)-5-formyl-5,6,7,8-tetrahydrofolate. The 158-residue stretch at 219–376 (GMHVVLVGQP…LKAKLLEMIG (158 aa)) folds into the TrmE-type G domain. Asn229 provides a ligand contact to K(+). GTP-binding positions include 229–234 (NVGKSS), 248–254 (TDIAGTT), 273–276 (DTAG), and 357–359 (SAR). Ser233 provides a ligand contact to Mg(2+). K(+)-binding residues include Thr248, Ile250, and Thr253. Residue Thr254 participates in Mg(2+) binding. (6S)-5-formyl-5,6,7,8-tetrahydrofolate is bound at residue Lys450.

The protein belongs to the TRAFAC class TrmE-Era-EngA-EngB-Septin-like GTPase superfamily. TrmE GTPase family. Homodimer. Heterotetramer of two MnmE and two MnmG subunits. K(+) is required as a cofactor.

The protein localises to the cytoplasm. In terms of biological role, exhibits a very high intrinsic GTPase hydrolysis rate. Involved in the addition of a carboxymethylaminomethyl (cmnm) group at the wobble position (U34) of certain tRNAs, forming tRNA-cmnm(5)s(2)U34. The chain is tRNA modification GTPase MnmE from Chromobacterium violaceum (strain ATCC 12472 / DSM 30191 / JCM 1249 / CCUG 213 / NBRC 12614 / NCIMB 9131 / NCTC 9757 / MK).